Consider the following 494-residue polypeptide: UPF0371 protein SPCG_0344 (494 aa).

The protein belongs to the UPF0371 family.

This Streptococcus pneumoniae (strain CGSP14) protein is UPF0371 protein SPCG_0344.